The following is a 295-amino-acid chain: 4-diphosphocytidyl-2-C-methyl-D-erythritol kinase (295 aa).

The active site involves K15. 102 to 112 (PIASGVGGGSS) is a binding site for ATP. D144 is an active-site residue.

The protein belongs to the GHMP kinase family. IspE subfamily.

The catalysed reaction is 4-CDP-2-C-methyl-D-erythritol + ATP = 4-CDP-2-C-methyl-D-erythritol 2-phosphate + ADP + H(+). The protein operates within isoprenoid biosynthesis; isopentenyl diphosphate biosynthesis via DXP pathway; isopentenyl diphosphate from 1-deoxy-D-xylulose 5-phosphate: step 3/6. Catalyzes the phosphorylation of the position 2 hydroxy group of 4-diphosphocytidyl-2C-methyl-D-erythritol. In Mesorhizobium japonicum (strain LMG 29417 / CECT 9101 / MAFF 303099) (Mesorhizobium loti (strain MAFF 303099)), this protein is 4-diphosphocytidyl-2-C-methyl-D-erythritol kinase.